The following is a 101-amino-acid chain: Non-structural protein 7a (101 aa).

Residues 1–43 form the signal peptide; it reads MLVFVHAVLVTALILLLIGRIQLLERLLLSHLLNLTTVSNVLG. A helical transmembrane segment spans residues 76-96; that stretch reads LLVVVLRVIFLVLLGFSCYTL.

This sequence belongs to the coronaviruses ns7/ns7a protein family.

It localises to the host membrane. In terms of biological role, may function in the formation of membrane-bound replication complexes or in the assembly of the virus. This chain is Non-structural protein 7a, found in Felidae (cat family).